Consider the following 438-residue polypeptide: UDP-N-acetylmuramoylalanine--D-glutamate ligase (438 aa).

Glycine 112–threonine 118 is a binding site for ATP.

The protein belongs to the MurCDEF family.

Its subcellular location is the cytoplasm. It catalyses the reaction UDP-N-acetyl-alpha-D-muramoyl-L-alanine + D-glutamate + ATP = UDP-N-acetyl-alpha-D-muramoyl-L-alanyl-D-glutamate + ADP + phosphate + H(+). It participates in cell wall biogenesis; peptidoglycan biosynthesis. In terms of biological role, cell wall formation. Catalyzes the addition of glutamate to the nucleotide precursor UDP-N-acetylmuramoyl-L-alanine (UMA). This is UDP-N-acetylmuramoylalanine--D-glutamate ligase from Escherichia coli O6:K15:H31 (strain 536 / UPEC).